A 65-amino-acid polypeptide reads, in one-letter code: Conotoxin Cal1.5 (65 aa).

The first 18 residues, M1 to A18, serve as a signal peptide directing secretion. A propeptide spanning residues V19–L49 is cleaved from the precursor. 2 cysteine pairs are disulfide-bonded: C52–C62 and C53–C59. P61 is modified (4-hydroxyproline).

It belongs to the conotoxin T superfamily. Expressed by the venom duct.

Its subcellular location is the secreted. In terms of biological role, probable neurotoxin with unknown target. Possibly targets ion channels. The protein is Conotoxin Cal1.5 of Californiconus californicus (California cone).